Reading from the N-terminus, the 103-residue chain is MKTLLLTLVVVTIICLDLGYTEMCNMCVRPYPFMSSCCPEGQDRCYKSYWVNENRKQEAYHGKYPVILERGCVTACTGPGSGSIYNLYTCCPTNRCGSSSTSG.

An N-terminal signal peptide occupies residues 1–21 (MKTLLLTLVVVTIICLDLGYT). 5 disulfides stabilise this stretch: C24–C45, C27–C37, C38–C72, C76–C90, and C91–C96.

Belongs to the three-finger toxin family. Ancestral subfamily. Orphan group XVII sub-subfamily. In terms of tissue distribution, expressed by the venom gland.

The protein resides in the secreted. The protein is Cytotoxin-like protein TA-BMBGT3 of Bungarus multicinctus (Many-banded krait).